Consider the following 110-residue polypeptide: Secreted Ly-6/uPAR-related protein 1 (110 aa).

The signal sequence occupies residues 1–22 (MTLRWAMWLLLLAAWSMGYGEA). Positions 24 to 73 (RCYTCEQPTAINSCKNIAQCKMEDTACKTVLETVEAAFPFNHSPMVTRSC) constitute a UPAR/Ly6 domain. 5 disulfide bridges follow: C25–C50, C28–C37, C43–C73, C77–C93, and C94–C99.

In terms of assembly, homodimer. Interacts with PLAU. Interacts with CHRNA7. As to expression, expressed in skin, eye, whole lung, trachea, esophagus and stomach. Widely expressed in various tissues including spleen and thymus but not pancreas. Expressed in macrophages, dendritic cells, T and B cells. Expressed in lung specifically in ciliated bronchial epithelial cells (at protein level). Expression is decreased in lungs of asthmatic model mice. Expressed in the cornea.

The protein resides in the secreted. Functionally, has an antitumor activity. Was found to be a marker of late differentiation of the skin. Implicated in maintaining the physiological and structural integrity of the keratinocyte layers of the skin. In vitro down-regulates keratinocyte proliferation; the function may involve the proposed role as modulator of nicotinic acetylcholine receptors (nAChRs) activity. In vitro inhibits alpha-7-dependent nAChR currents in an allosteric manner. In T cells may be involved in regulation of intracellular Ca(2+) signaling. Seems to have a immunomodulatory function in the cornea. The function may implicate a possible role as a scavenger receptor for PLAU thereby blocking PLAU-dependent functions of PLAUR such as in cell migration and proliferation. This chain is Secreted Ly-6/uPAR-related protein 1 (Slurp1), found in Mus musculus (Mouse).